Here is a 767-residue protein sequence, read N- to C-terminus: GPI ethanolamine phosphate transferase 2 (767 aa).

Residues Asn186 and Asn401 are each glycosylated (N-linked (GlcNAc...) asparagine). 2 helical membrane passes run 407–427 and 434–454; these read LGLF…YGLG and VTFL…SSYV. Residue Asn490 is glycosylated (N-linked (GlcNAc...) asparagine). A run of 3 helical transmembrane segments spans residues 513 to 533, 538 to 558, and 595 to 615; these read ILWA…CLNS, IWRS…LVFV, and IPIF…KMSA. Residue Asn627 is glycosylated (N-linked (GlcNAc...) asparagine). 3 helical membrane-spanning segments follow: residues 655-675, 695-715, and 733-755; these read SVVL…IWWA, TLLT…CTML, and LAWT…SQVL.

Belongs to the PIGG/PIGN/PIGO family. PIGG subfamily.

It is found in the endoplasmic reticulum membrane. It functions in the pathway glycolipid biosynthesis; glycosylphosphatidylinositol-anchor biosynthesis. Ethanolamine phosphate transferase involved in glycosylphosphatidylinositol-anchor biosynthesis. Transfers ethanolamine phosphate to the GPI second mannose. This is GPI ethanolamine phosphate transferase 2 (las21) from Aspergillus fumigatus (strain ATCC MYA-4609 / CBS 101355 / FGSC A1100 / Af293) (Neosartorya fumigata).